The chain runs to 399 residues: Probable protein phosphatase 2C 28 (399 aa).

In terms of domain architecture, PPM-type phosphatase spans 48–356 (EFSMAVVQAN…DDITVIVVFL (309 aa)). The Mn(2+) site is built by D87, G88, D288, and D347.

The protein belongs to the PP2C family. The cofactor is Mg(2+). It depends on Mn(2+) as a cofactor.

It carries out the reaction O-phospho-L-seryl-[protein] + H2O = L-seryl-[protein] + phosphate. It catalyses the reaction O-phospho-L-threonyl-[protein] + H2O = L-threonyl-[protein] + phosphate. The protein is Probable protein phosphatase 2C 28 of Oryza sativa subsp. japonica (Rice).